The primary structure comprises 62 residues: MKANDFRKMAEAELKQKRDELTQELFNLKFQLNTGRLENTGKLGAIRKDIARINTILTESRG.

Belongs to the universal ribosomal protein uL29 family.

The protein is Large ribosomal subunit protein uL29 of Trichlorobacter lovleyi (strain ATCC BAA-1151 / DSM 17278 / SZ) (Geobacter lovleyi).